The chain runs to 392 residues: Putative glutamate--cysteine ligase 2 (392 aa).

The segment at 347–367 (AARKHGAAPEPGTRTRGDDGV) is disordered.

It belongs to the glutamate--cysteine ligase type 2 family. YbdK subfamily.

It carries out the reaction L-cysteine + L-glutamate + ATP = gamma-L-glutamyl-L-cysteine + ADP + phosphate + H(+). Functionally, ATP-dependent carboxylate-amine ligase which exhibits weak glutamate--cysteine ligase activity. The sequence is that of Putative glutamate--cysteine ligase 2 from Corynebacterium jeikeium (strain K411).